Here is a 308-residue protein sequence, read N- to C-terminus: 11-beta-hydroxysteroid dehydrogenase-like 2 (308 aa).

The helical; Signal-anchor for type II membrane protein transmembrane segment at 10–30 (FLLPPLTISFLVLFYPFYLFT) threads the bilayer. Residues 53 to 79 (GASS…VARR) and Asp-104 each bind NADP(+). Ser-183 serves as a coordination point for substrate. Tyr-196 (proton acceptor) is an active-site residue. Residues 196–200 (YSASK) and Lys-200 each bind NADP(+).

Belongs to the short-chain dehydrogenases/reductases (SDR) family.

Its subcellular location is the membrane. The polypeptide is 11-beta-hydroxysteroid dehydrogenase-like 2 (HSD2) (Arabidopsis thaliana (Mouse-ear cress)).